The primary structure comprises 388 residues: Protein DVU_0534 (388 aa).

The next 10 helical transmembrane spans lie at 10–31 (LMTPGNIITGIILVMGLVLTVL), 57–78 (LLCGVALAAGGYVTSASCYLFG), 89–106 (AITTAFLGYFFVVVALNY), 130–144 (EVGLCVATYLTVLFV), 166–191 (LTLVLTIFGVVLSTLHQSSLGALFLI), 199–222 (LWYSSFLPVFFFISSMVAGLSMVI), 254–265 (AASFVLAGYFMI), 291–306 (MLGFVALPSFLYALGV), 316–328 (FASVLGVLGIVMN), and 354–368 (IGISVFIVTSIITVY).

This sequence belongs to the NrfD family.

It localises to the cell membrane. In terms of biological role, HMWC (high-molecular-weight cytochrome c), ORF2, ORF3, ORF4, ORF5 and ORF6 in the HMC operon form a transmembrane protein complex that allows electron flow from the periplasmic hydrogenase to the cytoplasmic enzymes that catalyze reduction of sulfates. The protein is Protein DVU_0534 of Nitratidesulfovibrio vulgaris (strain ATCC 29579 / DSM 644 / CCUG 34227 / NCIMB 8303 / VKM B-1760 / Hildenborough) (Desulfovibrio vulgaris).